Consider the following 390-residue polypeptide: Lipoyl synthase, mitochondrial (390 aa).

A mitochondrion-targeting transit peptide spans 1–18 (MALYRAPKLQRSLLNRCL). Residues Cys99, Cys104, Cys110, Cys137, Cys141, Cys144, and Ser351 each contribute to the [4Fe-4S] cluster site. Residues 120-340 (AEGRSAATAT…KQVAEDLGFL (221 aa)) enclose the Radical SAM core domain.

It belongs to the radical SAM superfamily. Lipoyl synthase family. [4Fe-4S] cluster serves as cofactor.

It localises to the mitochondrion. It carries out the reaction [[Fe-S] cluster scaffold protein carrying a second [4Fe-4S](2+) cluster] + N(6)-octanoyl-L-lysyl-[protein] + 2 oxidized [2Fe-2S]-[ferredoxin] + 2 S-adenosyl-L-methionine + 4 H(+) = [[Fe-S] cluster scaffold protein] + N(6)-[(R)-dihydrolipoyl]-L-lysyl-[protein] + 4 Fe(3+) + 2 hydrogen sulfide + 2 5'-deoxyadenosine + 2 L-methionine + 2 reduced [2Fe-2S]-[ferredoxin]. It functions in the pathway protein modification; protein lipoylation via endogenous pathway; protein N(6)-(lipoyl)lysine from octanoyl-[acyl-carrier-protein]: step 2/2. Its function is as follows. Catalyzes the radical-mediated insertion of two sulfur atoms into the C-6 and C-8 positions of the octanoyl moiety bound to the lipoyl domains of lipoate-dependent enzymes, thereby converting the octanoylated domains into lipoylated derivatives. This is Lipoyl synthase, mitochondrial from Coprinopsis cinerea (strain Okayama-7 / 130 / ATCC MYA-4618 / FGSC 9003) (Inky cap fungus).